We begin with the raw amino-acid sequence, 494 residues long: Aspartyl/glutamyl-tRNA(Asn/Gln) amidotransferase subunit B (494 aa).

Residues 475-494 are disordered; that stretch reads TSGRADPKATNQMLAKKLKG.

This sequence belongs to the GatB/GatE family. GatB subfamily. Heterotrimer of A, B and C subunits.

It catalyses the reaction L-glutamyl-tRNA(Gln) + L-glutamine + ATP + H2O = L-glutaminyl-tRNA(Gln) + L-glutamate + ADP + phosphate + H(+). The catalysed reaction is L-aspartyl-tRNA(Asn) + L-glutamine + ATP + H2O = L-asparaginyl-tRNA(Asn) + L-glutamate + ADP + phosphate + 2 H(+). Its function is as follows. Allows the formation of correctly charged Asn-tRNA(Asn) or Gln-tRNA(Gln) through the transamidation of misacylated Asp-tRNA(Asn) or Glu-tRNA(Gln) in organisms which lack either or both of asparaginyl-tRNA or glutaminyl-tRNA synthetases. The reaction takes place in the presence of glutamine and ATP through an activated phospho-Asp-tRNA(Asn) or phospho-Glu-tRNA(Gln). The chain is Aspartyl/glutamyl-tRNA(Asn/Gln) amidotransferase subunit B from Acaryochloris marina (strain MBIC 11017).